The primary structure comprises 422 residues: Beclin-1-like protein (422 aa).

The stretch at 119 to 243 forms a coiled coil; it reads MLEIMDRELR…KQQLDKLRDT (125 aa). The interval 182–201 is disordered; that stretch reads QSLNDAIAEEEQEREELHEQ.

The protein belongs to the beclin family. In terms of assembly, interacts with Rab18, preferentially binding to the GTP-bound form.

Plays a central role in autophagy. The sequence is that of Beclin-1-like protein from Drosophila melanogaster (Fruit fly).